Here is a 440-residue protein sequence, read N- to C-terminus: UDP-N-acetylmuramoylalanine--D-glutamate ligase (440 aa).

Residue 115–121 (GSNGKST) coordinates ATP.

It belongs to the MurCDEF family.

The protein resides in the cytoplasm. The enzyme catalyses UDP-N-acetyl-alpha-D-muramoyl-L-alanine + D-glutamate + ATP = UDP-N-acetyl-alpha-D-muramoyl-L-alanyl-D-glutamate + ADP + phosphate + H(+). Its pathway is cell wall biogenesis; peptidoglycan biosynthesis. Functionally, cell wall formation. Catalyzes the addition of glutamate to the nucleotide precursor UDP-N-acetylmuramoyl-L-alanine (UMA). The chain is UDP-N-acetylmuramoylalanine--D-glutamate ligase from Vibrio cholerae serotype O1 (strain ATCC 39315 / El Tor Inaba N16961).